The following is a 415-amino-acid chain: Acetylornithine aminotransferase (415 aa).

Pyridoxal 5'-phosphate is bound by residues 115–116 (GA) and F148. R151 lines the N(2)-acetyl-L-ornithine pocket. Residue 239-242 (DEVQ) participates in pyridoxal 5'-phosphate binding. K268 carries the N6-(pyridoxal phosphate)lysine modification. S295 is a binding site for N(2)-acetyl-L-ornithine. T296 lines the pyridoxal 5'-phosphate pocket.

This sequence belongs to the class-III pyridoxal-phosphate-dependent aminotransferase family. ArgD subfamily. In terms of assembly, homodimer. Requires pyridoxal 5'-phosphate as cofactor.

It is found in the cytoplasm. The enzyme catalyses N(2)-acetyl-L-ornithine + 2-oxoglutarate = N-acetyl-L-glutamate 5-semialdehyde + L-glutamate. The protein operates within amino-acid biosynthesis; L-arginine biosynthesis; N(2)-acetyl-L-ornithine from L-glutamate: step 4/4. The chain is Acetylornithine aminotransferase from Prochlorococcus marinus subsp. pastoris (strain CCMP1986 / NIES-2087 / MED4).